Reading from the N-terminus, the 95-residue chain is Enhancer of yellow 2b transcription factor (95 aa).

The protein belongs to the ENY2 family. As to expression, expressed specifically in testis.

In terms of biological role, testis-specific paralog of the ubiquitously expressed transcription and mRNA export factor e(y)2. Cannot functionally replace e(y)2. The sequence is that of Enhancer of yellow 2b transcription factor (e(y)2b) from Drosophila melanogaster (Fruit fly).